Here is a 356-residue protein sequence, read N- to C-terminus: Metacaspase-1 (356 aa).

The segment at 1 to 47 (MYSGRSGAPPPAHSPYPNSYNHGPPGHSAGHNVPPPPPTQPVQFGHG) is disordered. Catalysis depends on residues His-147 and Cys-203.

It belongs to the peptidase C14B family.

Its function is as follows. Involved in cell death (apoptosis). In Ajellomyces capsulatus (strain NAm1 / WU24) (Darling's disease fungus), this protein is Metacaspase-1 (MCA1).